The sequence spans 312 residues: Olfactory receptor 1J21 (312 aa).

Transmembrane regions (helical) follow at residues 29–49 (ALFL…ILLI), 58–78 (PMYF…SVTA), 95–115 (AGCV…NFLL), 143–163 (LLVM…TLLF), 197–217 (LVIL…ILVS), 241–261 (CGSH…LYFF), and 272–292 (VIVA…IYSL).

The protein belongs to the G-protein coupled receptor 1 family.

It is found in the cell membrane. Odorant receptor. Activated by (+) and (-)-carvone. This is Olfactory receptor 1J21 from Mus musculus (Mouse).